We begin with the raw amino-acid sequence, 216 residues long: MTLYVLSKPILLHFLTQLRSKNIDQISFRKNLVKLGRIIGYEIVNTLDYESIDVETPLGTKAKGIYIYDLENILIISILRAATPFVEGLLKALPTARLGVIAASRKEKEVQVGYPEDIPVDVYYMKIPQVSHKDTVIIADPMIATGSTMRKAIKSIVNSQPKRIYIASVIISEYGLKRLMEEFPFVDIFTISVDPEIDNRGFILPGLGDAGDRAFG.

30 to 34 (KNLVK) is a GTP binding site. Residues R80, R105, and 140–148 (DPMIATGST) contribute to the 5-phospho-alpha-D-ribose 1-diphosphate site. Uracil contacts are provided by residues I203 and 208–210 (GDA). D209 provides a ligand contact to 5-phospho-alpha-D-ribose 1-diphosphate.

It belongs to the UPRTase family. It depends on Mg(2+) as a cofactor.

The catalysed reaction is UMP + diphosphate = 5-phospho-alpha-D-ribose 1-diphosphate + uracil. The protein operates within pyrimidine metabolism; UMP biosynthesis via salvage pathway; UMP from uracil: step 1/1. Its activity is regulated as follows. Allosterically activated by GTP. In terms of biological role, catalyzes the conversion of uracil and 5-phospho-alpha-D-ribose 1-diphosphate (PRPP) to UMP and diphosphate. This is Uracil phosphoribosyltransferase from Sulfolobus acidocaldarius (strain ATCC 33909 / DSM 639 / JCM 8929 / NBRC 15157 / NCIMB 11770).